We begin with the raw amino-acid sequence, 576 residues long: Nuclear/nucleolar GTPase 2 (576 aa).

Disordered regions lie at residues 1-61 and 166-186; these read MVKK…SNEY and QDAFEEKNGAGPSGEGGEEED. Basic and acidic residues predominate over residues 16 to 34; it reads HSLDANRADGKKKTTETRS. Residues 42–52 are compositionally biased toward basic residues; it reads KMYKTRPKRNA. Positions 206–367 constitute a CP-type G domain; sequence WGELYKVIDS…LIDCPGVVYQ (162 aa). Residues 224–228 carry the DARXP motif motif; the sequence is DARDP. Residues 254 to 257 are G4; the sequence is NKCD. 254–257 lines the GTP pocket; that stretch reads NKCD. The interval 283 to 285 is G5; that stretch reads SVN. Residues 316 to 323 are G1; that stretch reads GYPNVGKS. 319 to 324 serves as a coordination point for GTP; that stretch reads NVGKSS. The G2 stretch occupies residues 342-346; that stretch reads GETKV. Residues 360 to 363 form a G3 region; that stretch reads DCPG. Gly-363 serves as a coordination point for GTP. Residues 502 to 576 are disordered; the sequence is TQQQKDVPVQ…DEEDESDSAE (75 aa). The span at 509 to 530 shows a compositional bias: basic and acidic residues; it reads PVQRDFYDEKDLKDDKKAKEST. Positions 531-576 are enriched in acidic residues; that stretch reads ETDAENGTDAEEDEDAVSEDGVESDSDADEDAVSENDEEDESDSAE.

Belongs to the TRAFAC class YlqF/YawG GTPase family. RsgA subfamily. Interacts with the 60S ribosomal proteins RPL10AA, RPL10AB and RPL10AC. As to expression, ubiquitous, with higher levels in meristematic regions.

It localises to the nucleus. Its subcellular location is the nucleolus. The GTPase activity is stimulated in the presence of the 60S ribosomal subunit. Functionally, GTPase involved in pre-60S ribosomal subunit maturation. In Arabidopsis thaliana (Mouse-ear cress), this protein is Nuclear/nucleolar GTPase 2.